The following is a 283-amino-acid chain: Acetylglutamate kinase (283 aa).

Residues 64-65, Arg86, and Asn178 each bind substrate; that span reads GG.

Belongs to the acetylglutamate kinase family. ArgB subfamily.

The protein resides in the cytoplasm. It carries out the reaction N-acetyl-L-glutamate + ATP = N-acetyl-L-glutamyl 5-phosphate + ADP. It functions in the pathway amino-acid biosynthesis; L-arginine biosynthesis; N(2)-acetyl-L-ornithine from L-glutamate: step 2/4. Its function is as follows. Catalyzes the ATP-dependent phosphorylation of N-acetyl-L-glutamate. The polypeptide is Acetylglutamate kinase (Lactococcus lactis subsp. lactis (strain IL1403) (Streptococcus lactis)).